Here is a 235-residue protein sequence, read N- to C-terminus: MKVLVSPMSVAEAIEAIEGGADIIDVKNPAEGSLGANFPWVIREISELAKKYGKEISATTGDMPYKPGTASLAALGAAVAGADYIKVGLYGVKNAEEAYEMMVGVVRAVKDFDSSKKVVAAGYGDYYRISSVSPLDLPEAVAKAGADIVMVDTAIKDGTSLFDHMKIGDIESFVKLARDNGLMVALAGNISWNHIETLKELSPDIIGVRSIVCEGDRSSMIKRELVVKLMEAVHG.

Lysine 27 (schiff-base intermediate with substrate) is an active-site residue. Lysine 86 functions as the Proton acceptor in the catalytic mechanism.

It belongs to the MfnB family.

It carries out the reaction 2 D-glyceraldehyde 3-phosphate = 4-(hydroxymethyl)-2-furancarboxaldehyde phosphate + phosphate + 2 H2O. The protein operates within cofactor biosynthesis; methanofuran biosynthesis. Catalyzes the formation of 4-(hydroxymethyl)-2-furancarboxaldehyde phosphate (4-HFC-P) from two molecules of glyceraldehyde-3-P (GA-3-P). The protein is (5-formylfuran-3-yl)methyl phosphate synthase of Archaeoglobus fulgidus (strain ATCC 49558 / DSM 4304 / JCM 9628 / NBRC 100126 / VC-16).